The following is a 428-amino-acid chain: Sorting nexin-31 (428 aa).

The region spanning 1 to 107 is the PX domain; sequence MHICIPVTEE…EYFKKLQMDT (107 aa).

The protein belongs to the sorting nexin family.

In terms of biological role, may be involved in protein trafficking. The sequence is that of Sorting nexin-31 (snx31) from Xenopus tropicalis (Western clawed frog).